Reading from the N-terminus, the 295-residue chain is Nitrogenase iron protein 1 (295 aa).

ATP is bound at residue 12–19 (GKGGIGKS). Cys-100 provides a ligand contact to [4Fe-4S] cluster. Arg-103 is subject to ADP-ribosylarginine; by dinitrogenase reductase ADP-ribosyltransferase. Residue Cys-134 coordinates [4Fe-4S] cluster.

This sequence belongs to the NifH/BchL/ChlL family. Homodimer. Requires [4Fe-4S] cluster as cofactor. Post-translationally, the reversible ADP-ribosylation of Arg-103 inactivates the nitrogenase reductase and regulates nitrogenase activity.

It carries out the reaction N2 + 8 reduced [2Fe-2S]-[ferredoxin] + 16 ATP + 16 H2O = H2 + 8 oxidized [2Fe-2S]-[ferredoxin] + 2 NH4(+) + 16 ADP + 16 phosphate + 6 H(+). Its function is as follows. The key enzymatic reactions in nitrogen fixation are catalyzed by the nitrogenase complex, which has 2 components: the iron protein and the molybdenum-iron protein. The sequence is that of Nitrogenase iron protein 1 (nifH1) from Mastigocladus laminosus (Fischerella sp.).